The following is a 204-amino-acid chain: Large ribosomal subunit protein uL4 (204 aa).

A disordered region spans residues 49–74 (AKKRGEVSGGGKKPWSQKGGGRARAG). Residues 55–71 (VSGGGKKPWSQKGGGRA) show a composition bias toward gly residues.

Belongs to the universal ribosomal protein uL4 family. In terms of assembly, part of the 50S ribosomal subunit.

One of the primary rRNA binding proteins, this protein initially binds near the 5'-end of the 23S rRNA. It is important during the early stages of 50S assembly. It makes multiple contacts with different domains of the 23S rRNA in the assembled 50S subunit and ribosome. In terms of biological role, forms part of the polypeptide exit tunnel. This Wolinella succinogenes (strain ATCC 29543 / DSM 1740 / CCUG 13145 / JCM 31913 / LMG 7466 / NCTC 11488 / FDC 602W) (Vibrio succinogenes) protein is Large ribosomal subunit protein uL4.